Consider the following 215-residue polypeptide: MPNARILKIQAAAALNNLTLDIPQPFAFGTANKSPEFLQKFPTGKVPAFESSDGEVTLVESDAIAQYVAASGPAAPALLGRNVAEQAAVRQWICFAENEVFRNMMAVVLWRVGMREYDAGVDGEGAKGLEEALAVVERHLAVGEKEFLATEGELSLVDLTLASALFWAFMHYIDEEMRGRFPRVVRWYLRVVGAERVREVFGEPSLVAVRKEASV.

In terms of domain architecture, GST N-terminal spans 1 to 76; that stretch reads MPNARILKIQ…YVAASGPAAP (76 aa). The region spanning 82 to 215 is the GST C-terminal domain; it reads NVAEQAAVRQ…LVAVRKEASV (134 aa).

The protein belongs to the GST superfamily.

This is Glutathione S-transferase-like protein from Aspergillus aculeatus (strain ATCC 16872 / CBS 172.66 / WB 5094).